The chain runs to 407 residues: Tryptophan synthase beta chain (407 aa).

Lys98 is modified (N6-(pyridoxal phosphate)lysine).

Belongs to the TrpB family. Tetramer of two alpha and two beta chains. It depends on pyridoxal 5'-phosphate as a cofactor.

The enzyme catalyses (1S,2R)-1-C-(indol-3-yl)glycerol 3-phosphate + L-serine = D-glyceraldehyde 3-phosphate + L-tryptophan + H2O. It participates in amino-acid biosynthesis; L-tryptophan biosynthesis; L-tryptophan from chorismate: step 5/5. In terms of biological role, the beta subunit is responsible for the synthesis of L-tryptophan from indole and L-serine. This is Tryptophan synthase beta chain from Bradyrhizobium sp. (strain ORS 278).